The sequence spans 595 residues: Actin-histidine N-methyltransferase (595 aa).

Residues 1–22 (MGKKSRVKTQKSGTGATATVSP) are disordered. Polar residues predominate over residues 10 to 20 (QKSGTGATATV). Residues Arg-75, 104–106 (EGF), Arg-254, 275–279 (DMCNH), and 325–327 (SGF) each bind S-adenosyl-L-methionine. The region spanning 94–314 (EGFEMVNFKE…AGEQIYIFYG (221 aa)) is the SET domain. Ser-513 carries the phosphoserine modification. A compositionally biased stretch (polar residues) spans 549-573 (ENGLVNGENSIPNGTRSENENLNQE). Residues 549-595 (ENGLVNGENSIPNGTRSENENLNQEGSKRAVEDAKGSSSDSTDEVKE) are disordered. Positions 574 to 583 (GSKRAVEDAK) are enriched in basic and acidic residues.

Belongs to the class V-like SAM-binding methyltransferase superfamily. SETD3 actin-histidine methyltransferase family. In terms of assembly, interacts with MYOD1. In terms of processing, phosphorylated by GSK3B, which is required for recognition by the SCF(FBXW7) complex and subsequent degradation. Ubiquitinated by the SCF(FBXW7) complex following phosphorylation by GSK3B, leading to its degradation by the proteasome.

The protein resides in the cytoplasm. It localises to the nucleus. The enzyme catalyses L-histidyl-[protein] + S-adenosyl-L-methionine = N(tele)-methyl-L-histidyl-[protein] + S-adenosyl-L-homocysteine + H(+). In terms of biological role, protein-histidine N-methyltransferase that specifically mediates 3-methylhistidine (tele-methylhistidine) methylation of actin at 'His-73'. Histidine methylation of actin is required for smooth muscle contraction of the laboring uterus during delivery. Does not have protein-lysine N-methyltransferase activity and probably only catalyzes histidine methylation of actin. This Plecturocebus moloch (Dusky titi monkey) protein is Actin-histidine N-methyltransferase.